The chain runs to 234 residues: Cyclin-J18 (234 aa).

Belongs to the cyclin family.

The sequence is that of Cyclin-J18 (CYCJ18) from Arabidopsis thaliana (Mouse-ear cress).